The following is a 178-amino-acid chain: Pyruvate synthase subunit PorC (178 aa).

As to quaternary structure, heterotetramer of one alpha, one beta, one delta and one gamma chain.

It catalyses the reaction 2 oxidized [2Fe-2S]-[ferredoxin] + pyruvate + CoA = 2 reduced [2Fe-2S]-[ferredoxin] + acetyl-CoA + CO2 + H(+). The polypeptide is Pyruvate synthase subunit PorC (porC) (Methanocaldococcus jannaschii (strain ATCC 43067 / DSM 2661 / JAL-1 / JCM 10045 / NBRC 100440) (Methanococcus jannaschii)).